The primary structure comprises 239 residues: Ion-translocating oxidoreductase complex subunit E (239 aa).

5 consecutive transmembrane segments (helical) span residues 41–61, 71–91, 95–115, 130–150, and 184–204; these read LGLG…VSLV, LPAF…LMQA, ELYQ…VILG, SFDG…LGGL, and GFLL…LIAL.

This sequence belongs to the NqrDE/RnfAE family. In terms of assembly, the complex is composed of six subunits: RnfA, RnfB, RnfC, RnfD, RnfE and RnfG.

It localises to the cell inner membrane. In terms of biological role, part of a membrane-bound complex that couples electron transfer with translocation of ions across the membrane. This chain is Ion-translocating oxidoreductase complex subunit E, found in Pseudomonas paraeruginosa (strain DSM 24068 / PA7) (Pseudomonas aeruginosa (strain PA7)).